The primary structure comprises 116 residues: Acyl-CoA-binding protein homolog 3 (116 aa).

The 90-residue stretch at 3–92 folds into the ACB domain; sequence LQEKFDAAVE…LNDMFDKIAE (90 aa). An acyl-CoA contacts are provided by residues 34-38, Lys-60, and Tyr-79; that span reads YSLFK.

Belongs to the ACBP family.

Binds medium- and long-chain acyl-CoA esters with very high affinity and may function as an intracellular carrier of acyl-CoA esters. This is Acyl-CoA-binding protein homolog 3 (acbp-3) from Caenorhabditis elegans.